The following is a 190-amino-acid chain: Shikimate kinase (190 aa).

14-19 (GSGKST) provides a ligand contact to ATP. Residue Ser18 coordinates Mg(2+). Substrate-binding residues include Asp36, Arg60, and Gly82. Arg120 is a binding site for ATP. A substrate-binding site is contributed by Arg147.

The protein belongs to the shikimate kinase family. Monomer. It depends on Mg(2+) as a cofactor.

It localises to the cytoplasm. It catalyses the reaction shikimate + ATP = 3-phosphoshikimate + ADP + H(+). Its pathway is metabolic intermediate biosynthesis; chorismate biosynthesis; chorismate from D-erythrose 4-phosphate and phosphoenolpyruvate: step 5/7. In terms of biological role, catalyzes the specific phosphorylation of the 3-hydroxyl group of shikimic acid using ATP as a cosubstrate. This is Shikimate kinase from Chlorobium phaeobacteroides (strain DSM 266 / SMG 266 / 2430).